Reading from the N-terminus, the 288-residue chain is Executioner caspase (288 aa).

Cys131 is a catalytic residue.

It belongs to the peptidase C14A family.

Its function is as follows. May induce host cell apoptosis and contribute of the establishment of a special cell cleavage process in which apoppotic bodies are rescued by the virus and differentiate to form large vesicles in which virion assembles. The sequence is that of Executioner caspase from Spodoptera frugiperda ascovirus 1a (SfAV-1a).